A 1571-amino-acid chain; its full sequence is Disco-interacting protein 2 homolog A (1571 aa).

Residues 9–127 (EAAPLPAEVR…KRRSVLVHSS (119 aa)) enclose the DMAP1-binding domain. Positions 60–203 (LQAENRIPGP…APSAAATPGA (144 aa)) are disordered. The segment covering 86 to 98 (ASRDERFRSDVHT) has biased composition (basic and acidic residues). Position 94 is a phosphoserine (Ser-94). 2 stretches are compositionally biased toward polar residues: residues 127–139 (SVETYTPPDTSSA) and 152–162 (LTSTPLQSHSS). Thr-132 and Thr-155 each carry phosphothreonine. The segment covering 174–203 (SSTSSSASSTSSHPGGRPTTAPSAAATPGA) has biased composition (low complexity). Short sequence motifs (PXXP motif; required for interaction with CTTN) lie at residues 283–286 (PKRP) and 307–310 (PNQP). Residues 302-327 (VQQPDPNQPKPEGSETSVLRGEPLTA) are disordered.

This sequence belongs to the DIP2 family. Interacts with FSTL1; DIP2A may act as a cell surface receptor for FSTL1. Interacts (via N-terminus) with CTTN (via SH3 domain); the interaction promotes acetylation of CTTN and is required for proper synaptic transmission. Interacts with SHANK3. In terms of tissue distribution, low expression in all tissues tested.

Its subcellular location is the cell membrane. It is found in the mitochondrion. It localises to the cell projection. The protein localises to the dendritic spine. It catalyses the reaction acetate + ATP + CoA = acetyl-CoA + AMP + diphosphate. Functionally, catalyzes the de novo synthesis of acetyl-CoA in vitro. Promotes acetylation of CTTN, possibly by providing the acetyl donor, ensuring correct dendritic spine morphology and synaptic transmission. Binds to follistatin-related protein FSTL1 and may act as a cell surface receptor for FSTL1, contributing to AKT activation and subsequent FSTL1-induced survival and function of endothelial cells and cardiac myocytes. This chain is Disco-interacting protein 2 homolog A (DIP2A), found in Homo sapiens (Human).